We begin with the raw amino-acid sequence, 342 residues long: Ribosomal RNA small subunit methyltransferase H (342 aa).

S-adenosyl-L-methionine-binding positions include 36-38, D56, F82, D100, and Q107; that span reads GGH. The segment at 311–342 is disordered; it reads GESGMGKGNSAAASRFPTADSPFPASANGDAA.

Belongs to the methyltransferase superfamily. RsmH family.

Its subcellular location is the cytoplasm. It catalyses the reaction cytidine(1402) in 16S rRNA + S-adenosyl-L-methionine = N(4)-methylcytidine(1402) in 16S rRNA + S-adenosyl-L-homocysteine + H(+). Functionally, specifically methylates the N4 position of cytidine in position 1402 (C1402) of 16S rRNA. The protein is Ribosomal RNA small subunit methyltransferase H of Xanthomonas axonopodis pv. citri (strain 306).